We begin with the raw amino-acid sequence, 296 residues long: D-alanine--D-alanine ligase (296 aa).

Residues 103 to 293 (KEILMHHRMP…FDSFVKRIIE (191 aa)) form the ATP-grasp domain. Residue 129 to 180 (ISFPVAVKPSSGGSSIATFKVKSIQELKHAYEEASKYGEVMIEQWVTGKEIT) participates in ATP binding. The Mg(2+) site is built by D247, E260, and N262.

This sequence belongs to the D-alanine--D-alanine ligase family. Mg(2+) is required as a cofactor. Requires Mn(2+) as cofactor.

Its subcellular location is the cytoplasm. The enzyme catalyses 2 D-alanine + ATP = D-alanyl-D-alanine + ADP + phosphate + H(+). The protein operates within cell wall biogenesis; peptidoglycan biosynthesis. Cell wall formation. In Francisella tularensis subsp. tularensis (strain FSC 198), this protein is D-alanine--D-alanine ligase.